Reading from the N-terminus, the 709-residue chain is Twinkle homolog protein, chloroplastic/mitochondrial (709 aa).

The transit peptide at 1-16 (MRFLLRLPQIHFRKLS) directs the protein to the chloroplast and mitochondrion. The region spanning 280 to 385 (SEVIIVEGEI…KKSEDEHFKD (106 aa)) is the Toprim domain. Mg(2+) is bound by residues Glu286, Asp348, and Asp350. One can recognise an SF4 helicase domain in the interval 430-698 (THGHEYGVST…GSYSDSPVTP (269 aa)). ATP is bound at residue 460–467 (GIPNSGKS).

Mg(2+) serves as cofactor. In terms of tissue distribution, expressed in young leaves and shoot apex tissues. Detected in developing tissues such as cotyledons, sepals, pistils and inflorescences. Nearly undetectable in mature leaves.

It localises to the plastid. The protein localises to the chloroplast. It is found in the mitochondrion. The catalysed reaction is ATP + H2O = ADP + phosphate + H(+). In terms of biological role, has both DNA primase and DNA helicase activities and may be involved in organelle DNA replication. Capable of producing RNA primers of 9 to 18 bases from a single-stranded DNA template. The chain is Twinkle homolog protein, chloroplastic/mitochondrial from Arabidopsis thaliana (Mouse-ear cress).